The primary structure comprises 1036 residues: Mitogen-activated protein kinase kinase kinase 21 (1036 aa).

Residues 1 to 36 (MALRGAAGATDTPVSSAGGAPGGSASSSSTSSGGSA) are disordered. Residues 15 to 36 (SSAGGAPGGSASSSSTSSGGSA) show a composition bias toward low complexity. The region spanning 38-102 (AGAGLWAALY…PANYVAPCRP (65 aa)) is the SH3 domain. Residues 124 to 401 (LELKELIGAG…ALILEQLTAI (278 aa)) enclose the Protein kinase domain. ATP-binding positions include 130–138 (IGAGGFGQV) and K151. Residue D263 is the Proton acceptor of the active site. Phosphothreonine; by autocatalysis is present on T299. S303 carries the phosphoserine; by autocatalysis and MAP4K1 modification. Leucine-zipper regions lie at residues 425-446 (IQQM…EEEL) and 460-481 (LKRR…ELNI). The interval 517 to 551 (SDFQHKITVQASPNLDKRRSLNSSSSSPPSSPTMM) is disordered. 3 positions are modified to phosphoserine: S528, S543, and S547. Position 592 is a phosphothreonine (T592). S614 is modified (phosphoserine). The span at 748–763 (AEEPLPKEEKKKREGI) shows a compositional bias: basic and acidic residues. Disordered stretches follow at residues 748-791 (AEEP…SSPP) and 923-954 (PHSH…RSRS).

The protein belongs to the protein kinase superfamily. STE Ser/Thr protein kinase family. MAP kinase kinase kinase subfamily. As to quaternary structure, homodimer. Interacts with TLR4. It depends on Mg(2+) as a cofactor. Post-translationally, autophosphorylation on serine and threonine residues within the activation loop plays a role in enzyme activation.

It catalyses the reaction L-seryl-[protein] + ATP = O-phospho-L-seryl-[protein] + ADP + H(+). It carries out the reaction L-threonyl-[protein] + ATP = O-phospho-L-threonyl-[protein] + ADP + H(+). Homodimerization via the leucine zipper domains is required for autophosphorylation and subsequent activation. Functionally, negative regulator of TLR4 signaling. Does not activate JNK1/MAPK8 pathway, p38/MAPK14, nor ERK2/MAPK1 pathways. This is Mitogen-activated protein kinase kinase kinase 21 from Homo sapiens (Human).